Here is a 584-residue protein sequence, read N- to C-terminus: Probable DNA ligase (584 aa).

Glutamate 248 contacts ATP. The active-site N6-AMP-lysine intermediate is the lysine 250. Arginine 255, arginine 270, glutamate 299, phenylalanine 339, arginine 416, and lysine 422 together coordinate ATP.

This sequence belongs to the ATP-dependent DNA ligase family. Mg(2+) serves as cofactor.

It catalyses the reaction ATP + (deoxyribonucleotide)n-3'-hydroxyl + 5'-phospho-(deoxyribonucleotide)m = (deoxyribonucleotide)n+m + AMP + diphosphate.. DNA ligase that seals nicks in double-stranded DNA during DNA replication, DNA recombination and DNA repair. The sequence is that of Probable DNA ligase from Aquifex aeolicus (strain VF5).